We begin with the raw amino-acid sequence, 78 residues long: Translation initiation factor IF-1 (78 aa).

Positions 1 to 72 (MAKEAEMEFE…TRGRITYRKI (72 aa)) constitute an S1-like domain.

This sequence belongs to the IF-1 family. Component of the 30S ribosomal translation pre-initiation complex which assembles on the 30S ribosome in the order IF-2 and IF-3, IF-1 and N-formylmethionyl-tRNA(fMet); mRNA recruitment can occur at any time during PIC assembly.

Its subcellular location is the cytoplasm. In terms of biological role, one of the essential components for the initiation of protein synthesis. Stabilizes the binding of IF-2 and IF-3 on the 30S subunit to which N-formylmethionyl-tRNA(fMet) subsequently binds. Helps modulate mRNA selection, yielding the 30S pre-initiation complex (PIC). Upon addition of the 50S ribosomal subunit IF-1, IF-2 and IF-3 are released leaving the mature 70S translation initiation complex. This Mesoplasma florum (strain ATCC 33453 / NBRC 100688 / NCTC 11704 / L1) (Acholeplasma florum) protein is Translation initiation factor IF-1.